A 643-amino-acid chain; its full sequence is MSFSVTLPDGSKKDFDKAVSVKELASSIATSLGKAAVGAKINGEMKPLDYVVDEDVEAAIITDKDEEGLNILRATAAFLLEAIAKRKYPELRLGMHEADEGGFFVDTDKEDQIKITELPELEKEMQKAIKNGEKIEYTSMKKSELEDIFKDDQFKLDLLKDEKDEVAVYKLGDFVDFGFEALLPNTGKIKNFKLLSVAGAYWLGKSSNPMLQRIFGTAFFKKAALDEDLKRRAEIKERDHRTIGRDLDLFFVDPKVGAGLPYWMPKGATIRRVVERYIVDKEVADGYEHVYTPVLMNVDAYKTSGHWAHYRDDMFPPMDMGDGEMLELRPMNCPSHIQIYKHHIRSYRELPIRIAELGMMHRYEKSGALSGLQRVREMTLNDGHTFVALDQIREEFAKVLKLIMDVYKDFDITDYYFRLSYRDPKNTDKYYANDEMWEKSQSMLKAAMDDLGLDYVEAEGEAAFYGPKLDIQTKTALGNDETMSTIQLDFMLPERFGLTYVGQDGEEHRPVMIHRGIVGTMERFIAYLTEIYKGAFPTWLAPVQAEIIPVNEEAHGAYADKVREELAKRGFRAEVDHRNEKLGYKIRESQTQKVPYTLVLGDDEMNANGVNVRRYGTEEQISKSLDDFIAEIDADVKSYSREK.

Positions 1–62 constitute a TGS domain; it reads MSFSVTLPDG…DEDVEAAIIT (62 aa). The segment at 239 to 537 is catalytic; the sequence is DHRTIGRDLD…LTEIYKGAFP (299 aa). C333, H384, and H514 together coordinate Zn(2+).

Belongs to the class-II aminoacyl-tRNA synthetase family. As to quaternary structure, homodimer. Zn(2+) is required as a cofactor.

It is found in the cytoplasm. It carries out the reaction tRNA(Thr) + L-threonine + ATP = L-threonyl-tRNA(Thr) + AMP + diphosphate + H(+). Functionally, catalyzes the attachment of threonine to tRNA(Thr) in a two-step reaction: L-threonine is first activated by ATP to form Thr-AMP and then transferred to the acceptor end of tRNA(Thr). Also edits incorrectly charged L-seryl-tRNA(Thr). In Lactobacillus gasseri (strain ATCC 33323 / DSM 20243 / BCRC 14619 / CIP 102991 / JCM 1131 / KCTC 3163 / NCIMB 11718 / NCTC 13722 / AM63), this protein is Threonine--tRNA ligase.